We begin with the raw amino-acid sequence, 440 residues long: MAEDMAADEVTAPPRKVLIISAGASHSVALLSGDIVCSWGRGEDGQLGHGDAEDRPSPTQLSALDGHQIVSVTCGADHTVAYSQSGMEVYSWGWGDFGRLGHGNSSDLFTPLPIKALHGIRIKQIACGDSHCLAVTMEGEVQSWGRNQNGQLGLGDTEDSLVPQKIQAFEGIRIKMVAAGAEHTAAVTEDGDLYGWGWGRYGNLGLGDRTDRLVPERVTSTGGEKMSMVACGWRHTISVSYSGALYTYGWSKYGQLGHGDLEDHLIPHKLEALSNSFISQISGGWRHTMALTSDGKLYGWGWNKFGQVGVGNNLDQCSPVQVRFPDDQKVVQVSCGWRHTLAVTERNNVFAWGRGTNGQLGIGESVDRNFPKIIEALSVDGASGQHIESSNIDPSSGKSWVSPAERYAVVPDETGLTDGSSKGNGGDISVPQTDVKRVRI.

N-acetylalanine is present on alanine 2. 8 RCC1 repeats span residues 2–31 (AEDM…VALL), 32–84 (SGDI…AYSQ), 86–137 (GMEV…AVTM), 139–189 (GEVQ…AVTE), 190–241 (DGDL…SVSY), 243–293 (GALY…ALTS), 294–345 (DGKL…AVTE), and 347–399 (NNVF…SGKS). The segment at 397–423 (GKSWVSPAERYAVVPDETGLTDGSSKG) is required for interaction with COP1. Positions 413–440 (ETGLTDGSSKGNGGDISVPQTDVKRVRI) are disordered.

As to quaternary structure, homodimer in the absence of UV-B, but absorption of UV-B induces monomerization of UVR8 and interaction with COP1. Interacts with RUP1, RUP2 and histone H2B.

Its subcellular location is the nucleus. The protein resides in the cytoplasm. The protein localises to the cytosol. Its function is as follows. UV-B specific signaling component that acts as a UV-B photoreceptor and plays a key role in establishing UV-protective responses in plants. Upon UV-B irradiation, UVR8 undergoes an immediate switch from homodimer to monomer, accumulates in the nucleus, interacts with the photomorphogenic repressor COP1 and regulates the expression of the transcription factor HY5 by associating with chromatin (through histone H2B binding) in the HY5 promoter region. UVR8 is involved in controlling aspects of leaf growth and morphogenesis in response to UV-B, is required for normal progression of endocycle and has a regulatory role in stomatal differentiation. Is required for plant circadian clock response to photomorphogenic UV-B light, partly through the transcriptional activation of responsive clock genes. Promotes photosynthetic efficiency at elevated levels of UV-B. Plays a role in mediating the effects of UV-B radiation on pathogen resistance by controlling the expression of the sinapate biosynthetic pathway. The two tryptophans, Trp-285 and Trp-233, serve collectively as the UV-B chromophore. The chain is Ultraviolet-B receptor UVR8 from Arabidopsis thaliana (Mouse-ear cress).